The primary structure comprises 142 residues: Small ribosomal subunit protein uS12y (142 aa).

Residue Pro61 is modified to Hydroxyproline.

The protein belongs to the universal ribosomal protein uS12 family.

The sequence is that of Small ribosomal subunit protein uS12y (RPS23B) from Arabidopsis thaliana (Mouse-ear cress).